The following is a 526-amino-acid chain: Biotin carboxylase 2, chloroplastic (526 aa).

The transit peptide at 1–71 (MEATLPVCKS…GVTCRAEKIL (71 aa)) directs the protein to the chloroplast. Residues lysine 181, 213–274 (ASEI…PRHI), lysine 223, 229–230 (GG), 265–268 (EKYV), and histidine 273 each bind ATP. Residues 185–382 (RETMKKANVP…LIEEQIRVAM (198 aa)) form the ATP-grasp domain. Lysine 302 is a hydrogencarbonate binding site. ATP is bound by residues glutamate 340 and glutamate 353. Mg(2+)-binding residues include glutamate 340, glutamate 353, and asparagine 355. Residues glutamate 340, glutamate 353, and asparagine 355 each contribute to the Mn(2+) site. Hydrogencarbonate-binding residues include arginine 357, valine 360, and arginine 403. Arginine 357 is a catalytic residue. Arginine 403 is a binding site for biotin.

Acetyl-CoA carboxylase is a heterohexamer composed of biotin carboxyl carrier protein, biotin carboxylase and two subunits each of ACCase subunit alpha and ACCase plastid-coded subunit beta (accD). It depends on Mg(2+) as a cofactor. Requires Mn(2+) as cofactor.

The protein resides in the plastid. It is found in the chloroplast. It carries out the reaction N(6)-biotinyl-L-lysyl-[protein] + hydrogencarbonate + ATP = N(6)-carboxybiotinyl-L-lysyl-[protein] + ADP + phosphate + H(+). It participates in lipid metabolism; malonyl-CoA biosynthesis; malonyl-CoA from acetyl-CoA: step 1/1. This protein is a component of the acetyl coenzyme A carboxylase complex; first, biotin carboxylase catalyzes the carboxylation of the carrier protein and then the transcarboxylase transfers the carboxyl group to form malonyl-CoA. The chain is Biotin carboxylase 2, chloroplastic from Populus trichocarpa (Western balsam poplar).